Reading from the N-terminus, the 211-residue chain is Large ribosomal subunit protein uL4 (211 aa).

The tract at residues 42–87 (AHMRQGTASTLTRSEVRGGGRKPYKQKGTGRARQGSVRTPLRPGGG) is disordered. Basic residues predominate over residues 60–71 (GGRKPYKQKGTG).

Belongs to the universal ribosomal protein uL4 family. In terms of assembly, part of the 50S ribosomal subunit.

In terms of biological role, one of the primary rRNA binding proteins, this protein initially binds near the 5'-end of the 23S rRNA. It is important during the early stages of 50S assembly. It makes multiple contacts with different domains of the 23S rRNA in the assembled 50S subunit and ribosome. Forms part of the polypeptide exit tunnel. The chain is Large ribosomal subunit protein uL4 from Synechococcus sp. (strain CC9902).